We begin with the raw amino-acid sequence, 189 residues long: GTP cyclohydrolase 1 (189 aa).

Zn(2+) is bound by residues C78, H81, and C150.

This sequence belongs to the GTP cyclohydrolase I family. In terms of assembly, homomer.

The catalysed reaction is GTP + H2O = 7,8-dihydroneopterin 3'-triphosphate + formate + H(+). The protein operates within cofactor biosynthesis; 7,8-dihydroneopterin triphosphate biosynthesis; 7,8-dihydroneopterin triphosphate from GTP: step 1/1. In Bacillus cytotoxicus (strain DSM 22905 / CIP 110041 / 391-98 / NVH 391-98), this protein is GTP cyclohydrolase 1.